We begin with the raw amino-acid sequence, 156 residues long: Ribonuclease pancreatic (156 aa).

Positions 1 to 28 are cleaved as a signal peptide; it reads MALEKSLALLPLLVLVLLVLGWVQPSLG. The substrate site is built by Lys35 and Arg38. Catalysis depends on His40, which acts as the Proton acceptor. Intrachain disulfides connect Cys54/Cys112, Cys68/Cys123, Cys86/Cys138, and Cys93/Cys100. Residue Asn62 is glycosylated (N-linked (GlcNAc...) asparagine). Substrate is bound at residue 69-73; that stretch reads KPVNT. N-linked (GlcNAc...) asparagine glycosylation occurs at Asn90. 2 residues coordinate substrate: Lys94 and Arg113. His147 (proton donor) is an active-site residue.

It belongs to the pancreatic ribonuclease family. As to quaternary structure, monomer. Interacts with and forms tight 1:1 complexes with RNH1. Dimerization of two such complexes may occur. Interaction with RNH1 inhibits this protein.

Its subcellular location is the secreted. It catalyses the reaction an [RNA] containing cytidine + H2O = an [RNA]-3'-cytidine-3'-phosphate + a 5'-hydroxy-ribonucleotide-3'-[RNA].. It carries out the reaction an [RNA] containing uridine + H2O = an [RNA]-3'-uridine-3'-phosphate + a 5'-hydroxy-ribonucleotide-3'-[RNA].. Functionally, endonuclease that catalyzes the cleavage of RNA on the 3' side of pyrimidine nucleotides. Acts on single-stranded and double-stranded RNA. This Lagothrix lagotricha (Brown woolly monkey) protein is Ribonuclease pancreatic (RNASE1).